The chain runs to 400 residues: Serine/threonine transporter SstT (400 aa).

A run of 9 helical transmembrane segments spans residues 14 to 34 (IIIAIILGIGVALLFPTVTPY), 48 to 68 (SVAPILVFVLVLSSIANFQVG), 76 to 96 (VLLLYVVGMLLAAFSAVIASL), 136 to 156 (AISEANFIGILAWAIGLGLAM), 177 to 197 (IIHKVIAFAPVGIFGLVAVTF), 211 to 231 (LLVVLLGTMLFVALVINPILV), 285 to 305 (IPLGATVNMAGAAVTITVLTL), 311 to 331 (LGIHVDLATMIILSVVATISA), and 349 to 371 (CSLFGISSEIAMQVVAVGMIISV).

Belongs to the dicarboxylate/amino acid:cation symporter (DAACS) (TC 2.A.23) family.

It is found in the cell inner membrane. The catalysed reaction is L-serine(in) + Na(+)(in) = L-serine(out) + Na(+)(out). It catalyses the reaction L-threonine(in) + Na(+)(in) = L-threonine(out) + Na(+)(out). In terms of biological role, involved in the import of serine and threonine into the cell, with the concomitant import of sodium (symport system). This chain is Serine/threonine transporter SstT, found in Acinetobacter baumannii (strain AB307-0294).